The chain runs to 150 residues: 16.6 kDa heat shock protein (150 aa).

The region spanning 31–150 (AERCPVLTNV…PQLKAIPISG (120 aa)) is the sHSP domain.

The protein belongs to the small heat shock protein (HSP20) family. May form oligomeric structures.

Its subcellular location is the cytoplasm. This is 16.6 kDa heat shock protein (HSP16.6) from Oryza sativa subsp. japonica (Rice).